Consider the following 385-residue polypeptide: MKFLTLALSATATAMIIVNPEQQPLAPSIVQNPQHKSLIELAPYRTRWVTEEEKWSLKLDGVNFIDVTDEYQSGSYGTLHTTRVVHYPGAMEHAHEILPLTETLDKSNMRSNLEHFTSFYTRYYKSQTGIESATWLFDQVTAAVHESGASDHGATVERFAHPWGQFSIIARIPGQTDNTVILGSHQDSINLFLPSILAAPGADDDGSGTVTILEALRALLRSETIAHGQARNTIEFHWYSAEEGGLLGSQAVYANYKKNQRNVKAMLQQDMTGYVQGTLDAGEKESVGVIIDYVDQGLTAFIKEVITTYCDVPYVETKCGYACSDHASASRYGYPSAFVIESQFENSDKRIHTTEDKIEYLSFDHMLQHAKMSLAFAYELAFAPF.

An N-terminal signal peptide occupies residues 1–14 (MKFLTLALSATATA). Positions 15–85 (MIIVNPEQQP…YGTLHTTRVV (71 aa)) are excised as a propeptide. Positions 185, 204, 243, and 270 each coordinate Zn(2+). Cysteines 319 and 323 form a disulfide. Residue histidine 352 coordinates Zn(2+).

This sequence belongs to the peptidase M28 family. M28E subfamily. Monomer. Zn(2+) is required as a cofactor.

Its subcellular location is the secreted. Its function is as follows. Extracellular aminopeptidase that allows assimilation of proteinaceous substrates. This is Leucine aminopeptidase 1 (lap1) from Penicillium rubens (strain ATCC 28089 / DSM 1075 / NRRL 1951 / Wisconsin 54-1255) (Penicillium chrysogenum).